The primary structure comprises 113 residues: Protein USP2 (113 aa).

The N-terminal stretch at 1–18 (MKITMFFAALSAASGVFA) is a signal peptide. 6 repeat units span residues 32 to 37 (IGAGVG), 40 to 45 (IGAGVG), 46 to 49 (SYGY), 50 to 53 (PYGA), 59 to 65 (LQLLPLR), and 69 to 75 (LRRLPLR). The 2 X 6 AA repeats stretch occupies residues 32–45 (IGAGVGIGIGAGVG). Positions 46 to 53 (SYGYPYGA) are 2 X 4 AA approximate tandem repeats. Residues 59-75 (LQLLPLRWLPLRRLPLR) form a 2 X 7 AA approximate repeats region.

Its subcellular location is the secreted. The protein is Protein USP2 (USP2) of Puccinia graminis (Black stem rust fungus).